The chain runs to 366 residues: Cytochrome c peroxidase, mitochondrial (366 aa).

Histidine 123 functions as the Proton acceptor in the catalytic mechanism. The span at 195-206 shows a compositional bias: basic and acidic residues; that stretch reads IEWRPGRVDDNT. The segment at 195–218 is disordered; sequence IEWRPGRVDDNTASKVPPNGRLPD. Heme b is bound at residue histidine 247. The active-site Tryptophan radical intermediate is tryptophan 263.

Belongs to the peroxidase family. Cytochrome c peroxidase subfamily. As to quaternary structure, forms a one-to-one complex with cytochrome c. Heme b is required as a cofactor.

It localises to the mitochondrion matrix. The protein localises to the mitochondrion intermembrane space. It carries out the reaction 2 Fe(II)-[cytochrome c] + H2O2 + 2 H(+) = 2 Fe(III)-[cytochrome c] + 2 H2O. In terms of biological role, destroys radicals which are normally produced within the cells and which are toxic to biological systems. This is Cytochrome c peroxidase, mitochondrial (CCP1) from Candida albicans (strain SC5314 / ATCC MYA-2876) (Yeast).